Here is a 411-residue protein sequence, read N- to C-terminus: MRFIEEFINKGYFHQCTDLDRLTAITKETKIAAYIGFDCTATSLHIGSLMQIMILRLLQQHGHKPIVIIGGGTSKIGDPTWKDEVRKIVSKEDIAKNAEGIKKSLSKFIKFGDGKSDAIMLDNAEWLDSFNYLDFLRDFGSYFSVNRMLTMDSVKLRLEREQHLSFLEFNYMLLQAYDFYYLSKHYNCSLQLGGSDQWGNIVMGADLIRKISGKEVFGMTTPLLTTSSGAKMGKTAAGAVWLNEDLLSPYDYYQYWRNCEDADIVRFAKLYSEFTQEELNRFESLAAEDINAAKKQLAYELTKLCHSEQAAKSALETAVKIFEEGQIDENLPTVVLEKEVLQAGISAYELFHEAGLVTSKSEARKLIRGNGAKINDRLVEDENMIINTNFLLDKKVIKLSAGKKRHILVRV.

An L-tyrosine-binding site is contributed by tyrosine 34. The 'HIGH' region motif lies at 39–48 (CTATSLHIGS). L-tyrosine-binding residues include tyrosine 171 and glutamine 175. Residues 231–235 (KMGKT) carry the 'KMSKS' region motif. Lysine 234 provides a ligand contact to ATP. The 67-residue stretch at 345 to 411 (ISAYELFHEA…GKKRHILVRV (67 aa)) folds into the S4 RNA-binding domain.

The protein belongs to the class-I aminoacyl-tRNA synthetase family. TyrS type 1 subfamily. Homodimer.

It localises to the cytoplasm. The catalysed reaction is tRNA(Tyr) + L-tyrosine + ATP = L-tyrosyl-tRNA(Tyr) + AMP + diphosphate + H(+). Its function is as follows. Catalyzes the attachment of tyrosine to tRNA(Tyr) in a two-step reaction: tyrosine is first activated by ATP to form Tyr-AMP and then transferred to the acceptor end of tRNA(Tyr). The sequence is that of Tyrosine--tRNA ligase from Rickettsia africae (strain ESF-5).